Consider the following 496-residue polypeptide: Probable cytosol aminopeptidase (496 aa).

The Mn(2+) site is built by Lys267 and Asp272. Lys279 is a catalytic residue. Asp290, Asp349, and Glu351 together coordinate Mn(2+). Arg353 is a catalytic residue.

Belongs to the peptidase M17 family. The cofactor is Mn(2+).

It is found in the cytoplasm. The enzyme catalyses Release of an N-terminal amino acid, Xaa-|-Yaa-, in which Xaa is preferably Leu, but may be other amino acids including Pro although not Arg or Lys, and Yaa may be Pro. Amino acid amides and methyl esters are also readily hydrolyzed, but rates on arylamides are exceedingly low.. It carries out the reaction Release of an N-terminal amino acid, preferentially leucine, but not glutamic or aspartic acids.. Presumably involved in the processing and regular turnover of intracellular proteins. Catalyzes the removal of unsubstituted N-terminal amino acids from various peptides. This is Probable cytosol aminopeptidase from Methylobacillus flagellatus (strain ATCC 51484 / DSM 6875 / VKM B-1610 / KT).